We begin with the raw amino-acid sequence, 314 residues long: Homoserine kinase (314 aa).

ATP is bound at residue 95–105 (PHSRGLGSSAA).

The protein belongs to the GHMP kinase family. Homoserine kinase subfamily.

The protein localises to the cytoplasm. It catalyses the reaction L-homoserine + ATP = O-phospho-L-homoserine + ADP + H(+). The protein operates within amino-acid biosynthesis; L-threonine biosynthesis; L-threonine from L-aspartate: step 4/5. Its function is as follows. Catalyzes the ATP-dependent phosphorylation of L-homoserine to L-homoserine phosphate. This Mycolicibacterium vanbaalenii (strain DSM 7251 / JCM 13017 / BCRC 16820 / KCTC 9966 / NRRL B-24157 / PYR-1) (Mycobacterium vanbaalenii) protein is Homoserine kinase.